The sequence spans 512 residues: Cytochrome P450 monooxygenase hkm5 (512 aa).

The helical transmembrane segment at 18–38 threads the bilayer; that stretch reads LIQLVRALLWVLVITIGGAIV. 5 N-linked (GlcNAc...) asparagine glycosylation sites follow: Asn184, Asn263, Asn275, Asn374, and Asn419. Cys456 lines the heme pocket.

The protein belongs to the cytochrome P450 family. The cofactor is heme.

The protein localises to the membrane. It carries out the reaction hancockiamide A + reduced [NADPH--hemoprotein reductase] + O2 = hancockiamide G + oxidized [NADPH--hemoprotein reductase] + 2 H2O + H(+). It catalyses the reaction hancockiamide B + reduced [NADPH--hemoprotein reductase] + O2 = hancockiamide C + oxidized [NADPH--hemoprotein reductase] + 2 H2O + H(+). The catalysed reaction is hancockiamide D + reduced [NADPH--hemoprotein reductase] + O2 = hancockiamide H + oxidized [NADPH--hemoprotein reductase] + 2 H2O + H(+). It functions in the pathway secondary metabolite biosynthesis. Its function is as follows. Cytochrome P450 monooxygenase; part of the gene cluster that mediates the biosynthesis of hancockiamides, an unusual new family of N-cinnamoylated piperazines. The NRPS hkm10 and the NmrA-like reductase hkm9 are proposed to convert two molecules of L-Phe to the intermediary piperazine called xenocockiamide A. Xenocockiamide A is then converted to hancockiamide D via a series of hydroxylations and O-methylations. The tyrosinase hkm6 may catalyze an aromatic hydroxylation, then the 2-oxoglutarate-dependent Fe(II) dioxygenase hkm4 and the FAD-dependent phenol hydroxylase hkm7 may catalyze consecutive hydroxylations to install 2 more hydroxy groups, and the methyltransferase hkm8 probably catalyzes two methylations using 2 molecules of S-adenosyl-L-methionine (SAM). The NRPS hkm11 activates and transfers trans-cinnamate supplied by the PAL hkm12 to hancockiamide D and produces hancockiamide A. NRPS Hkm11 has the flexibility to tolerate the bulky hancockiamide G as a substrate and the absence of the acetyl-transferase hkm3 opens up the opportunity for hkm11 to introduce a second N-cinnamoyl moiety. The cytochrome P450 monooxygenase hkm5 catalyzes the methylenedioxy bridge formation, converting hancockiamide A into hancockiamide G. Hkm5 can also convert hancockiamide B into hancockiamide C, and hancockiamide D into hancockiamide H. The N-acetyltransferase hkm3 finally transfers an acetyl group to 1-N of piperazine, converting hancockiamide A into hancockiamide B and hancockiamide G into hancockiamide C. In Aspergillus hancockii, this protein is Cytochrome P450 monooxygenase hkm5.